The chain runs to 945 residues: Bifunctional glutamine synthetase adenylyltransferase/adenylyl-removing enzyme (945 aa).

Residues 1 to 440 are adenylyl removase; that stretch reads MMPLSPQLQQ…VFNELIGDDE (440 aa). An adenylyl transferase region spans residues 449–945; the sequence is AEYWRELWQD…SASWQKWLMA (497 aa).

It belongs to the GlnE family. It depends on Mg(2+) as a cofactor.

The catalysed reaction is [glutamine synthetase]-O(4)-(5'-adenylyl)-L-tyrosine + phosphate = [glutamine synthetase]-L-tyrosine + ADP. It catalyses the reaction [glutamine synthetase]-L-tyrosine + ATP = [glutamine synthetase]-O(4)-(5'-adenylyl)-L-tyrosine + diphosphate. In terms of biological role, involved in the regulation of glutamine synthetase GlnA, a key enzyme in the process to assimilate ammonia. When cellular nitrogen levels are high, the C-terminal adenylyl transferase (AT) inactivates GlnA by covalent transfer of an adenylyl group from ATP to specific tyrosine residue of GlnA, thus reducing its activity. Conversely, when nitrogen levels are low, the N-terminal adenylyl removase (AR) activates GlnA by removing the adenylyl group by phosphorolysis, increasing its activity. The regulatory region of GlnE binds the signal transduction protein PII (GlnB) which indicates the nitrogen status of the cell. In Klebsiella pneumoniae subsp. pneumoniae (strain ATCC 700721 / MGH 78578), this protein is Bifunctional glutamine synthetase adenylyltransferase/adenylyl-removing enzyme.